The sequence spans 604 residues: Sulfite reductase [NADPH] flavoprotein alpha-component (604 aa).

The Flavodoxin-like domain maps to 66–204; it reads VTVLSASQTG…AADGWTDNIA (139 aa). Residues 72 to 77, 119 to 122, and 155 to 164 contribute to the FMN site; these read SQTGNA, STQG, and LGDSSYPNFC. In terms of domain architecture, FAD-binding FR-type spans 239–453; it reads ADPFPAALLA…VERNDGFRLP (215 aa). Residues Thr-327, Gln-361, 391–394, 409–411, and 424–427 each bind FAD; these read RLYS, TVG, and GGAS. Residues 524–525, 530–534, and Asp-566 each bind NADP(+); these read SR and KIYVQ. Tyr-604 contacts FAD.

This sequence belongs to the NADPH-dependent sulphite reductase flavoprotein subunit CysJ family. It in the N-terminal section; belongs to the flavodoxin family. In the C-terminal section; belongs to the flavoprotein pyridine nucleotide cytochrome reductase family. In terms of assembly, alpha(8)-beta(8). The alpha component is a flavoprotein, the beta component is a hemoprotein. FAD serves as cofactor. FMN is required as a cofactor.

The enzyme catalyses hydrogen sulfide + 3 NADP(+) + 3 H2O = sulfite + 3 NADPH + 4 H(+). Its pathway is sulfur metabolism; hydrogen sulfide biosynthesis; hydrogen sulfide from sulfite (NADPH route): step 1/1. Functionally, component of the sulfite reductase complex that catalyzes the 6-electron reduction of sulfite to sulfide. This is one of several activities required for the biosynthesis of L-cysteine from sulfate. The flavoprotein component catalyzes the electron flow from NADPH -&gt; FAD -&gt; FMN to the hemoprotein component. This Neisseria meningitidis serogroup A / serotype 4A (strain DSM 15465 / Z2491) protein is Sulfite reductase [NADPH] flavoprotein alpha-component.